Reading from the N-terminus, the 96-residue chain is MEQAPEDQGPQREPYNEWTLELLEELKREAVRHFPRPWLHGLGQHIYETYGDTWTGVEAIIRILQRLLFVHFRIGCQHSRIGILRQRRARNGASRS.

The interval 1 to 42 (MEQAPEDQGPQREPYNEWTLELLEELKREAVRHFPRPWLHGL) is homooligomerization. Phosphoserine; by host is present on residues S79, S94, and S96.

The protein belongs to the HIV-1 VPR protein family. In terms of assembly, homooligomer, may form homodimer. Interacts with p6-gag region of the Pr55 Gag precursor protein through a (Leu-X-X)4 motif near the C-terminus of the P6gag protein. Interacts with host UNG. May interact with host RAD23A/HHR23A. Interacts with host VPRBP/DCAF1, leading to hijack the CUL4A-RBX1-DDB1-DCAF1/VPRBP complex, mediating ubiquitination of host proteins such as TERT and ZGPAT and arrest of the cell cycle in G2 phase. In terms of processing, phosphorylated on several residues by host. These phosphorylations regulate VPR activity for the nuclear import of the HIV-1 pre-integration complex.

The protein resides in the virion. It localises to the host nucleus. Its subcellular location is the host extracellular space. Its function is as follows. During virus replication, may deplete host UNG protein, and incude G2-M cell cycle arrest. Acts by targeting specific host proteins for degradation by the 26S proteasome, through association with the cellular CUL4A-DDB1 E3 ligase complex by direct interaction with host VPRPB/DCAF-1. Cell cycle arrest reportedly occurs within hours of infection and is not blocked by antiviral agents, suggesting that it is initiated by the VPR carried into the virion. Additionally, VPR induces apoptosis in a cell cycle dependent manner suggesting that these two effects are mechanistically linked. Detected in the serum and cerebrospinal fluid of AIDS patient, VPR may also induce cell death to bystander cells. During virus entry, plays a role in the transport of the viral pre-integration (PIC) complex to the host nucleus. This function is crucial for viral infection of non-dividing macrophages. May act directly at the nuclear pore complex, by binding nucleoporins phenylalanine-glycine (FG)-repeat regions. In Human immunodeficiency virus type 1 group M subtype C (isolate 92BR025) (HIV-1), this protein is Protein Vpr.